Reading from the N-terminus, the 171-residue chain is uncharacterized protein (171 aa).

Positions 1-18 are cleaved as a signal peptide; sequence MRYSKLTMLIPCALLLSA. A lipid anchor (N-palmitoyl cysteine) is attached at Cys19. Cys19 carries S-diacylglycerol cysteine lipidation.

It localises to the cell membrane. This is an uncharacterized protein from Escherichia coli (strain K12).